A 149-amino-acid chain; its full sequence is Oligosaccharyltransferase complex subunit OSTC (149 aa).

At M1–T32 the chain is on the cytoplasmic side. The helical transmembrane segment at V33–I53 threads the bilayer. The Extracellular segment spans residues V54–Y83. The helical transmembrane segment at I84–L104 threads the bilayer. The Cytoplasmic portion of the chain corresponds to D105–R117. Residues F118–F138 form a helical membrane-spanning segment. At M139 to G149 the chain is on the extracellular side.

Belongs to the OSTC family. Component of STT3A-containing oligosaccharyl transferase (OST-A) complex. STT3A-containing complex assembly occurs through the formation of 3 subcomplexes. Subcomplex 1 contains RPN1 and TMEM258, subcomplex 2 contains the STT3A-specific subunits STT3A, DC2/OSTC, and KCP2 as well as the core subunit OST4, and subcomplex 3 contains RPN2, DAD1, and OST48. The OST-A complex can form stable complexes with the Sec61 complex or with both the Sec61 and TRAP complexes. Interacts with PSEN1 and NCSTN; indicative for an association with the gamma-secretase complex.

The protein resides in the endoplasmic reticulum. Its subcellular location is the membrane. Its pathway is protein modification; protein glycosylation. In terms of biological role, subunit of STT3A-containing oligosaccharyl transferase (OST-A) complex that catalyzes the initial transfer of a defined glycan (Glc(3)Man(9)GlcNAc(2) in eukaryotes) from the lipid carrier dolichol-pyrophosphate to an asparagine residue within an Asn-X-Ser/Thr consensus motif in nascent polypeptide chains, the first step in protein N-glycosylation. N-glycosylation occurs cotranslationally and the complex associates with the Sec61 complex at the channel-forming translocon complex that mediates protein translocation across the endoplasmic reticulum (ER). Within the OST-A complex, acts as an adapter that anchors the OST-A complex to the Sec61 complex. May be involved in N-glycosylation of APP (amyloid-beta precursor protein). Can modulate gamma-secretase cleavage of APP by enhancing endoprotelysis of PSEN1. In Bos taurus (Bovine), this protein is Oligosaccharyltransferase complex subunit OSTC.